The primary structure comprises 418 residues: Serine protease inhibitor A3K (418 aa).

An N-terminal signal peptide occupies residues 1–21 (MAFIVAMGMILMAGICPAVLC). 4 N-linked (GlcNAc...) asparagine glycosylation sites follow: N39, N105, N185, and N270. The RCL stretch occupies residues 369–394 (GTEAAAATGVIGGIRKAILPAVHFNR).

This sequence belongs to the serpin family. Expressed in liver and secreted in plasma.

The protein localises to the secreted. Its function is as follows. Contrapsin inhibits trypsin-like proteases. This Mus musculus (Mouse) protein is Serine protease inhibitor A3K (Serpina3k).